Reading from the N-terminus, the 150-residue chain is SsrA-binding protein (150 aa).

This sequence belongs to the SmpB family.

Its subcellular location is the cytoplasm. In terms of biological role, required for rescue of stalled ribosomes mediated by trans-translation. Binds to transfer-messenger RNA (tmRNA), required for stable association of tmRNA with ribosomes. tmRNA and SmpB together mimic tRNA shape, replacing the anticodon stem-loop with SmpB. tmRNA is encoded by the ssrA gene; the 2 termini fold to resemble tRNA(Ala) and it encodes a 'tag peptide', a short internal open reading frame. During trans-translation Ala-aminoacylated tmRNA acts like a tRNA, entering the A-site of stalled ribosomes, displacing the stalled mRNA. The ribosome then switches to translate the ORF on the tmRNA; the nascent peptide is terminated with the 'tag peptide' encoded by the tmRNA and targeted for degradation. The ribosome is freed to recommence translation, which seems to be the essential function of trans-translation. This is SsrA-binding protein from Borreliella afzelii (strain PKo) (Borrelia afzelii).